The sequence spans 65 residues: Large ribosomal subunit protein bL35 (65 aa).

Composition is skewed to basic residues over residues 1-15 (MPKMKTKKSASKRFT) and 26-44 (QAFKRHILTKKTTKNKRQL). The segment at 1–65 (MPKMKTKKSA…KSVRAMMPYA (65 aa)) is disordered.

This sequence belongs to the bacterial ribosomal protein bL35 family.

This chain is Large ribosomal subunit protein bL35, found in Cupriavidus metallidurans (strain ATCC 43123 / DSM 2839 / NBRC 102507 / CH34) (Ralstonia metallidurans).